Reading from the N-terminus, the 1217-residue chain is Sterol 3-beta-glucosyltransferase (1217 aa).

The region spanning glutamate 195–serine 232 is the GRAM 1 domain. In terms of domain architecture, PH spans alanine 246–phenylalanine 343. One can recognise a GRAM 2 domain in the interval alanine 590–leucine 656. Serine 766, arginine 767, aspartate 769, asparagine 1042, isoleucine 1072, histidine 1074, histidine 1087, serine 1090, glycine 1091, threonine 1092, aspartate 1111, and glutamine 1112 together coordinate UDP-alpha-D-glucose.

It belongs to the glycosyltransferase 28 family.

It localises to the cytoplasm. The protein resides in the membrane. The enzyme catalyses a sterol + UDP-alpha-D-glucose = a sterol 3-beta-D-glucoside + UDP + H(+). It catalyses the reaction ergosterol + UDP-alpha-D-glucose = ergosteryl 3-beta-D-glucoside + UDP + H(+). Functionally, sterol glycosyltransferase responsible for the glycosylation of ergosterol to form ergosterol-glucoside. In Vanderwaltozyma polyspora (strain ATCC 22028 / DSM 70294 / BCRC 21397 / CBS 2163 / NBRC 10782 / NRRL Y-8283 / UCD 57-17) (Kluyveromyces polysporus), this protein is Sterol 3-beta-glucosyltransferase.